The sequence spans 418 residues: Histidine--tRNA ligase (418 aa).

It belongs to the class-II aminoacyl-tRNA synthetase family.

The protein localises to the cytoplasm. It catalyses the reaction tRNA(His) + L-histidine + ATP = L-histidyl-tRNA(His) + AMP + diphosphate + H(+). In Methanococcus maripaludis (strain C6 / ATCC BAA-1332), this protein is Histidine--tRNA ligase.